A 737-amino-acid chain; its full sequence is Polyribonucleotide nucleotidyltransferase (737 aa).

Mg(2+) contacts are provided by aspartate 489 and aspartate 495. Residues 556–615 form the KH domain; that stretch reads PKIDTIKIDVDKIKIVIGKGGETIDKIIAETGVKIDIDEEGNVSIYSSDQDAINRAKEII. An S1 motif domain is found at 625–693; that stretch reads DEVYRAKVVR…EKGRIDASMK (69 aa). The tract at residues 691–737 is disordered; it reads SMKALLPRPPKPEHDEKGEKSERPHRPRHHKDHKPKKEFTETPKDSE. The segment covering 700–714 has biased composition (basic and acidic residues); the sequence is PKPEHDEKGEKSERP. Residues 715-724 show a composition bias toward basic residues; the sequence is HRPRHHKDHK. Over residues 725 to 737 the composition is skewed to basic and acidic residues; it reads PKKEFTETPKDSE.

Belongs to the polyribonucleotide nucleotidyltransferase family. Mg(2+) is required as a cofactor.

The protein resides in the cytoplasm. The enzyme catalyses RNA(n+1) + phosphate = RNA(n) + a ribonucleoside 5'-diphosphate. In terms of biological role, involved in mRNA degradation. Catalyzes the phosphorolysis of single-stranded polyribonucleotides processively in the 3'- to 5'-direction. This Streptococcus pneumoniae (strain Taiwan19F-14) protein is Polyribonucleotide nucleotidyltransferase.